The primary structure comprises 345 residues: Meiotically up-regulated gene 97 protein (345 aa).

Transmembrane regions (helical) follow at residues Met-292 to Met-312 and Phe-319 to Ile-329.

It is found in the membrane. In terms of biological role, required for correct meiotic chromosome segregation. Appears to also have role in sporulation. In Schizosaccharomyces pombe (strain 972 / ATCC 24843) (Fission yeast), this protein is Meiotically up-regulated gene 97 protein (mug97).